The sequence spans 900 residues: Iodate reductase subunit IdrA (900 aa).

The tract at residues 1–21 is disordered; it reads MSENIKQGGAGTFMQAPQDSV. Cys35, Cys38, and Cys42 together coordinate [3Fe-4S] cluster.

It belongs to the prokaryotic molybdopterin-containing oxidoreductase family. As to quaternary structure, the iodate reductase (Idr) complex is composed of a molybdopterin-dependent iodate reductase (IdrA and IdrB subunits) and two associated peroxidases (IdrP1 and IdrP2). Requires [3Fe-4S] cluster as cofactor. Mo-bis(molybdopterin guanine dinucleotide) serves as cofactor.

Its subcellular location is the periplasm. Its function is as follows. Involved in iodate respiration. May accept electrons from cytochrome c551, and catalyze the reduction of iodate (IO(3)(-)) to produce the chemically unstable intermediate hypoiodous acid (HIO). This intermediate then undergoes abiotic disproportionation to yield two molecules of iodide (I(-)) and one molecule of iodate. The resultant iodate subsequently cycles back into the reductive pathway. The initial reduction of iodate may inadvertently produce low levels of incidental toxic H(2)O(2), which is detoxified by IdrP1 and IdrP2. The sequence is that of Iodate reductase subunit IdrA from Denitromonas iodatirespirans.